We begin with the raw amino-acid sequence, 228 residues long: Interleukin-27 subunit beta (228 aa).

The N-terminal stretch at 1-18 is a signal peptide; sequence MSKLLFLSLALWASRSPG. 2 consecutive Fibronectin type-III domains span residues 26 to 124 and 127 to 224; these read ALSQ…VAER and KPDP…VESA. 2 N-linked (GlcNAc...) asparagine glycosylation sites follow: asparagine 54 and asparagine 104.

Belongs to the type I cytokine receptor family. Type 3 subfamily. As to quaternary structure, heterodimer with IL27/IL27A; not disulfide-linked. This heterodimer is known as interleukin IL-27. Heterodimer with IL12A; not disulfide-linked. This heterodimer is known as interleukin IL-35. Interacts with SQSTM1.

Its subcellular location is the secreted. In terms of biological role, associates with IL27 to form the IL-27 interleukin, a heterodimeric cytokine which functions in innate immunity. IL-27 has pro- and anti-inflammatory properties, that can regulate T-helper cell development, suppress T-cell proliferation, stimulate cytotoxic T-cell activity, induce isotype switching in B-cells, and that has diverse effects on innate immune cells. Among its target cells are CD4 T-helper cells which can differentiate in type 1 effector cells (TH1), type 2 effector cells (TH2) and IL17 producing helper T-cells (TH17). It drives rapid clonal expansion of naive but not memory CD4 T-cells. It also strongly synergizes with IL-12 to trigger interferon-gamma/IFN-gamma production of naive CD4 T-cells, binds to the cytokine receptor WSX-1/TCCR. Another important role of IL-27 is its antitumor activity as well as its antiangiogenic activity with activation of production of antiangiogenic chemokines. The polypeptide is Interleukin-27 subunit beta (Ebi3) (Mus musculus (Mouse)).